Reading from the N-terminus, the 316-residue chain is MTSKNSIQKALYLAFERLQWSELRDSVPLTLSEQDLENLRGINEKISLSEVTDIYLPLSRLLNLIVKAKQQRGLVVDEFLGQKPSRSPYIISIAGSVAVGKSTTARILQALLRHWPEHPKVDLVTTDGFLYPLADLKRKGLLQRKGFPESYDMKMLVEFISAVKSGQPHVKAPIYSHVTYDRVKNQHQTVSQPDILILEGLNVLQTGLDSPVDTRRPFVSDFVDFSIYVDAEEPLLKQWYKERFLQFRSGAFSDKKSYFHHYSSLTDDEANTIAANIWDTINGPNLQLNIQPTRERAHLILQKGQDHLMSHVLMRK.

95–102 (GSVAVGKS) contributes to the ATP binding site.

It belongs to the prokaryotic pantothenate kinase family.

It is found in the cytoplasm. The catalysed reaction is (R)-pantothenate + ATP = (R)-4'-phosphopantothenate + ADP + H(+). It functions in the pathway cofactor biosynthesis; coenzyme A biosynthesis; CoA from (R)-pantothenate: step 1/5. In Shewanella baltica (strain OS223), this protein is Pantothenate kinase.